Here is a 726-residue protein sequence, read N- to C-terminus: NHL repeat-containing protein 2 (726 aa).

In terms of domain architecture, Thioredoxin spans Gln-43–Asp-200. 6 NHL repeats span residues Lys-212–Asn-254, Asn-265–Glu-307, Ile-335–Leu-369, Phe-409–Val-439, Ala-461–Lys-505, and Thr-518–Glu-562.

In terms of assembly, monomer. As to expression, ubiquitous. Detected in heart, kidney, muscle, brain, lung, liver and in skin fibroblasts (at protein level).

Its subcellular location is the cytoplasm. It localises to the cytosol. Its function is as follows. Required for normal embryonic development. The protein is NHL repeat-containing protein 2 (NHLRC2) of Homo sapiens (Human).